We begin with the raw amino-acid sequence, 343 residues long: MATKLTPKQKAQLDELSMSEKIAILLIQVGEDTTGEILRHLDIDSITEISKQIVQLNGTDKQIGAAVLEEFFAIFQSNQYINTGGLEYARELLTRTLGSEEAKKVMDKLTKSLQTQKNFAYLGKIKPQQLADFIINEHPQTIALILAHMEAPNAAETLSYFPDEMKAEISIRMANLGEISPQVVKRVSTVLENKLESLTSYKIEVGGLRAVAEIFNRLGQKSAKTTLARIESVDNKLAGAIKEMMFTFEDIVKLDNFAIREILKVADKKDLSLALKTSTKDLTDKFLNNMSSRAAEQFVEEMQYLGAVKIKDVDVAQRKIIEIVQSLQEKGVIQTGEEEDVIE.

The short motif at 137–140 is the Part of the EHPQR-motif element; sequence EHPQ. Residues 245-248 carry the M-F-X-F motif; its intrinsic flexibility is probably coupled to flagellar rotation motif; sequence MFTF.

It belongs to the FliG family.

The protein resides in the cell inner membrane. Its subcellular location is the bacterial flagellum basal body. One of the proteins that forms a switch complex that is proposed to be located at the base of the basal body. This complex interacts with chemotaxis proteins (such as CheY) in addition to contacting components of the motor that determine the direction of flagellar rotation. Required for flagellum synthesis and motility. In H.pylori four flagellar switch proteins are encoded, FliG, FliM, FliN and FliY. The sequence is that of Flagellar motor switch protein FliG from Helicobacter pylori (strain ATCC 700392 / 26695) (Campylobacter pylori).